The sequence spans 1412 residues: Protein MODIFIER OF SNC1 1 (1412 aa).

Disordered stretches follow at residues 1–276 (MTSS…QSYP), 384–437 (GYGS…TQRP), 472–798 (QQMQ…KQKQ), 827–888 (NEGV…DESI), 909–1144 (DIKV…WNDG), and 1156–1412 (AEEM…GDRN). The span at 56 to 103 (SWGSKSSLNAWGTSSLSPRTESGPGSPSHLSNRPSSGGSVTRPSTADS) shows a compositional bias: polar residues. Phosphoserine is present on Ser-72. Low complexity predominate over residues 109–119 (SSSSVAWDSNS). The segment covering 120 to 135 (RPSSASGVFPSNQPSV) has biased composition (polar residues). Basic and acidic residues-rich tracts occupy residues 197 to 207 (AEKDTSEKSTR) and 236 to 267 (ANDR…EGQL). A compositionally biased stretch (basic and acidic residues) spans 478–488 (RNERREIRNDA). Composition is skewed to polar residues over residues 517-531 (KTRT…SSVV), 539-553 (QPRT…NKVS), 565-581 (SKNS…TNKN), and 610-639 (RIVN…TNTE). Residues 665–713 (DPKDNQRSTMRELARQRAQQRQKEEEERARDQRAKALAKLEELNRRSQI) show a composition bias toward basic and acidic residues. Positions 667-717 (KDNQRSTMRELARQRAQQRQKEEEERARDQRAKALAKLEELNRRSQIYEEG) form a coiled coil. Composition is skewed to polar residues over residues 738–749 (GSHSSNATNSVE), 756–779 (KNTT…QQDN), and 829–847 (GVSS…SAES). The segment covering 850-862 (PKRKNNRNGKKKH) has biased composition (basic residues). Residues 877–888 (VGKETKSGDESI) show a composition bias toward basic and acidic residues. Phosphoserine is present on Ser-883. Polar residues-rich tracts occupy residues 914-938 (GDSS…NWKS) and 983-1003 (QTTV…QTSS). Basic and acidic residues predominate over residues 1006 to 1023 (KRVEIERYVPKPIVKEMA). Residues 1056–1070 (LQPSGSTAGKSGSPS) show a composition bias toward polar residues. Residues 1071–1084 (KSRHGNGRQGKHGR) are compositionally biased toward basic residues. A compositionally biased stretch (polar residues) spans 1106-1137 (FVTSNQPIRGTVNYHSSKQTEQIAAKDQTTCN). 3 stretches are compositionally biased toward basic and acidic residues: residues 1191–1202 (DPKKGNKRDFNK), 1222–1232 (KEGRVPGDHVW), and 1242–1251 (GGRESTRDKP). Composition is skewed to polar residues over residues 1266 to 1286 (GFTT…QNRS) and 1293 to 1307 (VEQN…NTGQ). 2 stretches are compositionally biased toward basic and acidic residues: residues 1338 to 1351 (SNRD…HYEY) and 1359 to 1369 (YDGERSREQSK). Residues 1384 to 1397 (QGQQRQGGYQQQRG) are compositionally biased toward low complexity. A compositionally biased stretch (gly residues) spans 1400 to 1412 (GRNGGHGFTGDRN).

As to quaternary structure, interacts with TCP14 and TCP15.

In terms of biological role, involved in the regulation of the chromatin structure and DNA methylation at the SNC1 locus. Regulates the expression of SNC1 at chromatin level. The polypeptide is Protein MODIFIER OF SNC1 1 (MOS1) (Arabidopsis thaliana (Mouse-ear cress)).